A 589-amino-acid polypeptide reads, in one-letter code: Glutamine--fructose-6-phosphate aminotransferase [isomerizing] (589 aa).

Residue Cys-2 is the Nucleophile; for GATase activity of the active site. In terms of domain architecture, Glutamine amidotransferase type-2 spans 2–221; it reads CGIIGIVSLR…DDELGFITPE (220 aa). SIS domains are found at residues 286–426 and 445–579; these read VIEE…KMEK and IGEE…PDKP. The active-site For Fru-6P isomerization activity is Lys-584.

In terms of assembly, homodimer.

The protein localises to the cytoplasm. The enzyme catalyses D-fructose 6-phosphate + L-glutamine = D-glucosamine 6-phosphate + L-glutamate. In terms of biological role, catalyzes the first step in hexosamine metabolism, converting fructose-6P into glucosamine-6P using glutamine as a nitrogen source. This chain is Glutamine--fructose-6-phosphate aminotransferase [isomerizing], found in Sulfurisphaera tokodaii (strain DSM 16993 / JCM 10545 / NBRC 100140 / 7) (Sulfolobus tokodaii).